Here is a 311-residue protein sequence, read N- to C-terminus: m7GpppX diphosphatase (311 aa).

Substrate contacts are provided by residues Glu159, Lys181, and 242–253 (HYQPSFYHLHVH). The Histidine triad motif motif lies at 249–253 (HLHVH). Residue His251 is the Nucleophile of the active site.

Belongs to the HIT family. As to expression, expressed in neurons in the ventral cord, the nerve ring and the pharynx.

The protein localises to the nucleus. The enzyme catalyses a 5'-end (N(7)-methyl 5'-triphosphoguanosine)-ribonucleoside in mRNA + H2O = N(7)-methyl-GMP + a 5'-end diphospho-ribonucleoside in mRNA + 2 H(+). The catalysed reaction is a 5'-end (N(2),N(2),N(7)-trimethyl 5'-triphosphoguanosine)-ribonucleoside in mRNA + H2O = (N(2),N(2),N(7))-trimethyl-GMP + a 5'-end diphospho-ribonucleoside in mRNA + 2 H(+). Its activity is regulated as follows. The hydrolytic product 7-methylguanosine diphosphate (m7GDP) efficiently inhibits the decapping scavenger activity and acts as a competitive inhibitor in vitro. Functionally, decapping scavenger enzyme that catalyzes the cleavage of a residual cap structure following the degradation of mRNAs of the 3'-&gt;5' exosome-mediated mRNA decay pathway. Hydrolyzes cap analog structures like 7-methylguanosine nucleoside triphosphate (m7GpppG) and tri-methyl guanosine nucleoside triphosphate (m3(2,2,7)GpppG) with up to 2 nucleotide substrates (small capped oligoribonucleotides) and specifically releases 5'-phosphorylated RNA fragments and 7-methylguanosine monophosphate (m7GMP). Does not hydrolyze unmethylated cap analog (GpppG) and shows no decapping activity on intact m7GpppG-capped mRNA molecules. Does not hydrolyze 7-methylguanosine diphosphate (m7GDP) and tri-methylguanosine diphosphate (m3(2,2,7)GDP) to m(7)GMP and m3(2,2,7)GMP, respectively. May also play a role in the 5'-&gt;3 mRNA decay pathway; m7GDP, the downstream product released by the 5'-&gt;3' mRNA mediated decapping activity, may be also converted by dcs-1 to m7GMP. Binds to m7GpppG and strongly to m7GDP. This chain is m7GpppX diphosphatase (dcs-1), found in Caenorhabditis elegans.